We begin with the raw amino-acid sequence, 448 residues long: Beclin-1 (448 aa).

N-acetylmethionine is present on Met1. Phosphoserine occurs at positions 14 and 29. The tract at residues 47–66 is disordered; it reads TTAQAKPGETQEEEANSGEE. Phosphoserine; by AMPK is present on residues Ser88, Ser91, and Ser94. The BH3 signature appears at 106 to 125; that stretch reads TMENLSRRLKVTGDLFDIMS. The interaction with BCL2 and BCL2L1 isoform Bcl-X(L) stretch occupies residues 110-157; sequence LSRRLKVTGDLFDIMSGQTDVDHPLCEECTDTLLDQLDTQLNVTENEC. Thr117 is modified (phosphothreonine; by DAPK1). The stretch at 140-268 forms a coiled coil; it reads DTLLDQLDTQ…LDKLKKTNVF (129 aa). Residues 243-448 form an evolutionary conserved domain (ECD) region; the sequence is DELKSVENQV…AWVSSQFYNK (206 aa). Residues Lys400 and Lys435 each participate in a glycyl lysine isopeptide (Lys-Gly) (interchain with G-Cter in ubiquitin) cross-link. The tract at residues 423–448 is required for membrane-association; that stretch reads WTKALKFMLTNLKWGLAWVSSQFYNK.

It belongs to the beclin family. A homodimeric form is proposed to exist; this metastable form readily transits to ATG14- or UVRAG-containing complexes with BECN1:UVRAG being more stable than BECN1:ATG14. Component of the PI3K (PI3KC3/PI3K-III/class III phosphatidylinositol 3-kinase) complex whose core is composed of the catalytic subunit PIK3C3, the regulatory subunit PIK3R4 and BECN1, and associates with additional regulatory/auxiliary subunits to form alternative complex forms. Accepted alternative complex forms containing a fourth regulatory subunit in a mutually exclusive manner are PI3K complex I (PI3KC3-C1) containing ATG14, and PI3K complex II (PI3KC3-C2) containing UVRAG. PI3KC3-C1 displays a V-shaped architecture with PIK3R4 serving as a bridge between PIK3C3 and the ATG14:BECN1 subcomplex. Both, PI3KC3-C1 and PI3KC3-C2, can associate with further regulatory subunits, such as RUBCN, SH3GLB1/Bif-1 and AMBRA1. PI3KC3-C1 probably associates with PIK3CB. Forms a complex with PPP2CA and AMBRA1; AMBRA1 and BECN1 components of the complex regulate MYC stability via different pathways. Component of the complex, at least composed of LRPPRC, BECN1 and BCL2; the interactions prevent BECN1 from forming an autophagy-inducing complex with PIK3C3. Interacts with AMBRA1, GOPC, GRID2 and PIK3CB. Interacts with BCL2 and BCL2L1 isoform Bcl-X(L); the interaction inhibits BECN1 function in promoting autophagy by interfering with the formation of the PI3K complex. Interacts with cytosolic HMGB1; inhibits the interaction of BECN1 and BCL2 leading to promotion of autophagy. Interacts with USP10, USP13, VMP1, DAPK1. Interacts with the poly-Gln domain of ATXN3; the interaction causes deubiquitination at Lys-400 and stabilizes BECN1. Interacts with SLAMF1. Interacts with TRIM5; the interaction causes activation of BECN1 by causing its dissociation from its inhibitors BCL2 and TAB2. Interacts with active ULK1 (phosphorylated on 'Ser-317') and MEFV simultaneously. Interacts with TRIM50. Interacts with TRIM16. Interacts with WDR81 and WDR91; negatively regulates the PI3 kinase/PI3K activity associated with endosomal membranes. Interacts with LAPTM4B; competes with EGFR for LAPTM4B binding; regulates EGFR activity. Interacts with ATG14; this interaction is increased in the absence of TMEM39A. Interacts with WASHC1; preventing interaction with AMBRA1 and the DCX(AMBRA1) complex and subsequent ubiquitination. Interacts with TRIM17. Interacts with BCL2L10/BCL-B (via BH1 domain). Interacts with SH3BGRL. Interacts with Irgm1; enhancing BECN1-interacting partners and influencing the composition of the BECN1 complex. Interacts with ARMC3. Interacts with LRPPRC. As to quaternary structure, (Microbial infection) Interacts with murine gammaherpesvirus 68 M11; the viral protein binds BECN1 with higher affinity than cellular BCL2. Post-translationally, phosphorylation at Thr-117 by DAPK1 reduces its interaction with BCL2 and BCL2L1 and promotes induction of autophagy. In response to autophagic stimuli, phosphorylated at serine residues by AMPK in an ATG14-dependent manner, and this phosphorylation is critical for maximally efficient autophagy. Polyubiquitinated by NEDD4, both with 'Lys-11'- and 'Lys-63'-linkages. 'Lys-11'-linked polyubiquitination leads to degradation and is enhanced when the stabilizing interaction partner VPS34 is depleted. Deubiquitinated by USP10 and USP13, leading to stabilize the PIK3C3/VPS34-containing complexes. Polyubiquitinated at Lys-400 with 'Lys-48'-linkages. 'Lys-48'-linked poyubiquitination of Lys-400 leads to degradation. Deubiquitinated by ATXN3, leading to stabilization. Ubiquitinated at Lys-435 via 'Lys-63'-linkage by the DCX(AMBRA1) complex, thereby increasing the association between BECN1 and PIK3C3 to promote PIK3C3 activity. 'Lys-48'-linked ubiquitination by RNF216 leads to proteasomal degradation and autophagy inhibition. In terms of processing, proteolytically processed by caspases including CASP8 and CASP3; the C-terminal fragments lack autophagy-inducing capacity and are proposed to induce apoptosis. Thus the cleavage is proposed to be an determinant to switch from autophagy to apoptosis pathways affecting cellular homeostasis including viral infections and survival of tumor cells.

Its subcellular location is the cytoplasm. The protein resides in the golgi apparatus. It localises to the trans-Golgi network membrane. It is found in the endosome membrane. The protein localises to the endoplasmic reticulum membrane. Its subcellular location is the mitochondrion membrane. The protein resides in the endosome. It localises to the cytoplasmic vesicle. It is found in the autophagosome. The protein localises to the mitochondrion. Its subcellular location is the nucleus. Functionally, plays a central role in autophagy. Acts as a core subunit of different PI3K complex forms that mediate formation of phosphatidylinositol 3-phosphate and are believed to play a role in multiple membrane trafficking pathways: PI3KC3-C1 is involved in initiation of autophagosomes and PI3KC3-C2 in maturation of autophagosomes and endocytosis. Involved in regulation of degradative endocytic trafficking and required for the abscission step in cytokinesis, probably in the context of PI3KC3-C2. Essential for the formation of PI3KC3-C2 but not PI3KC3-C1 PI3K complex forms. Involved in endocytosis including endosome formation in neuronal cells. May play a role in antiviral host defense. Its function is as follows. Beclin-1-C 35 kDa localized to mitochondria can promote apoptosis; it induces the mitochondrial translocation of BAX and the release of proapoptotic factors. The protein is Beclin-1 (Becn1) of Mus musculus (Mouse).